Consider the following 213-residue polypeptide: Large ribosomal subunit protein uL1 (213 aa).

It belongs to the universal ribosomal protein uL1 family.

This is Large ribosomal subunit protein uL1 (RPL10A) from Chlamydomonas reinhardtii (Chlamydomonas smithii).